We begin with the raw amino-acid sequence, 322 residues long: Packaging protein 3 (322 aa).

A disordered region spans residues 1-24 (MHPILKNIRSQPDQGRAEEHNPEL). The segment at 1–127 (MHPILKNIRS…RDVERWQHDT (127 aa)) is interaction with packaging protein 1.

It belongs to the adenoviridae packaging protein 3 family. In terms of assembly, part of the genome packaging complex composed of packaging proteins 1, 2 and 3; this complex specifically binds to the packaging sequence on the left end of viral genomic DNA and performs packaging of the viral genome. Interacts with hexon-linking protein IIIa; this interaction is required to promote correct genome packaging. Cleaved at different sites by the viral protease during virion maturation.

It localises to the host nucleus. In terms of biological role, involved in viral genome packaging through its interaction with packaging proteins 1 and 2. After proteolytic cleavage by adenovirus protease, L1 52/55k protein is removed from the capsid during viral maturation. The chain is Packaging protein 3 from Pantherophis guttatus (Corn snake).